We begin with the raw amino-acid sequence, 89 residues long: Small ribosomal subunit protein uS15 (89 aa).

Residues 1-18 are compositionally biased toward basic and acidic residues; that stretch reads MSLDTAEKQKLIENHQVH. Residues 1–23 are disordered; the sequence is MSLDTAEKQKLIENHQVHPTDTG.

This sequence belongs to the universal ribosomal protein uS15 family. Part of the 30S ribosomal subunit. Forms a bridge to the 50S subunit in the 70S ribosome, contacting the 23S rRNA.

One of the primary rRNA binding proteins, it binds directly to 16S rRNA where it helps nucleate assembly of the platform of the 30S subunit by binding and bridging several RNA helices of the 16S rRNA. Functionally, forms an intersubunit bridge (bridge B4) with the 23S rRNA of the 50S subunit in the ribosome. The chain is Small ribosomal subunit protein uS15 from Prochlorococcus marinus (strain AS9601).